The following is a 91-amino-acid chain: DNA-binding protein HU (91 aa).

Belongs to the bacterial histone-like protein family.

Functionally, histone-like DNA-binding protein which is capable of wrapping DNA to stabilize it, and thus to prevent its denaturation under extreme environmental conditions. Also seems to act as a fortuitous virulence factor in delayed sequelae by binding to heparan sulfate-proteoglycans in the extracellular matrix of target organs and acting as a nidus for in situ immune complex formation. The protein is DNA-binding protein HU (hup) of Streptococcus pyogenes serotype M1.